The primary structure comprises 147 residues: Nudix hydrolase 1 (147 aa).

N-acetylserine is present on Ser2. Residues 7-140 (IPRVAVVVFI…EKLFGSGFNP (134 aa)) form the Nudix hydrolase domain. The Nudix box signature appears at 41 to 62 (GHLEFGESFEECAAREVMEETG). Mg(2+)-binding residues include Glu56 and Glu60.

The protein belongs to the Nudix hydrolase family. Homodimer. Mg(2+) serves as cofactor. Requires Mn(2+) as cofactor. In terms of tissue distribution, expressed in roots, stems and leaves.

It is found in the cytoplasm. It carries out the reaction 7,8-dihydroneopterin 3'-triphosphate + H2O = 7,8-dihydroneopterin 3'-phosphate + diphosphate + H(+). The catalysed reaction is NAD(+) + H2O = beta-nicotinamide D-ribonucleotide + AMP + 2 H(+). It catalyses the reaction NADH + H2O = reduced beta-nicotinamide D-ribonucleotide + AMP + 2 H(+). The enzyme catalyses 8-oxo-dGTP + H2O = 8-oxo-dGMP + diphosphate + H(+). Functionally, mediates the hydrolysis of some nucleoside diphosphate derivatives. Its substrate specificity is unclear. In vitro, it can use NTP, dNTP, 8-oxo-GTP, 8-oxo-dGTP, dGTP, dATP, dTTP or dihydroneopterin triphosphate (DHNTP) as substrate. Has some NADH pyrophosphatase activity in vitro; however, such activity may not be relevant in vivo due to the high concentration of manganese used during the experiments. Plays an important role in protection against oxidative DNA and RNA damage by removing oxidatively damaged form of guanine. The sequence is that of Nudix hydrolase 1 (NUDT1) from Arabidopsis thaliana (Mouse-ear cress).